The sequence spans 84 residues: Large ribosomal subunit protein bL27 (84 aa).

Residues M1–G22 form a disordered region.

Belongs to the bacterial ribosomal protein bL27 family.

The polypeptide is Large ribosomal subunit protein bL27 (Shewanella amazonensis (strain ATCC BAA-1098 / SB2B)).